Here is a 1035-residue protein sequence, read N- to C-terminus: Sulfite reductase [NADPH] flavoprotein component (1035 aa).

One can recognise an FAD-binding FR-type domain in the interval 648 to 879 (VKNFVVKVKE…VKPSVMKLPP (232 aa)). Residues 684 to 695 (YDIGEALGIHAR) and 814 to 824 (LKRREYSIASS) contribute to the FAD site.

FAD serves as cofactor. Requires FMN as cofactor.

The enzyme catalyses hydrogen sulfide + 3 NADP(+) + 3 H2O = sulfite + 3 NADPH + 4 H(+). Its pathway is sulfur metabolism; hydrogen sulfide biosynthesis; hydrogen sulfide from sulfite (NADPH route): step 1/1. Its function is as follows. This enzyme catalyzes the 6-electron reduction of sulfite to sulfide. This is one of several activities required for the biosynthesis of L-cysteine from sulfate. The protein is Sulfite reductase [NADPH] flavoprotein component (MET10) of Saccharomyces cerevisiae (strain ATCC 204508 / S288c) (Baker's yeast).